A 283-amino-acid polypeptide reads, in one-letter code: ATP phosphoribosyltransferase (283 aa).

Belongs to the ATP phosphoribosyltransferase family. Long subfamily. The cofactor is Mg(2+).

The protein localises to the cytoplasm. It catalyses the reaction 1-(5-phospho-beta-D-ribosyl)-ATP + diphosphate = 5-phospho-alpha-D-ribose 1-diphosphate + ATP. Its pathway is amino-acid biosynthesis; L-histidine biosynthesis; L-histidine from 5-phospho-alpha-D-ribose 1-diphosphate: step 1/9. Feedback inhibited by histidine. In terms of biological role, catalyzes the condensation of ATP and 5-phosphoribose 1-diphosphate to form N'-(5'-phosphoribosyl)-ATP (PR-ATP). Has a crucial role in the pathway because the rate of histidine biosynthesis seems to be controlled primarily by regulation of HisG enzymatic activity. This Nocardia farcinica (strain IFM 10152) protein is ATP phosphoribosyltransferase.